The chain runs to 124 residues: Large ribosomal subunit protein uL22 (124 aa).

It belongs to the universal ribosomal protein uL22 family. Part of the 50S ribosomal subunit.

This protein binds specifically to 23S rRNA; its binding is stimulated by other ribosomal proteins, e.g. L4, L17, and L20. It is important during the early stages of 50S assembly. It makes multiple contacts with different domains of the 23S rRNA in the assembled 50S subunit and ribosome. Its function is as follows. The globular domain of the protein is located near the polypeptide exit tunnel on the outside of the subunit, while an extended beta-hairpin is found that lines the wall of the exit tunnel in the center of the 70S ribosome. The protein is Large ribosomal subunit protein uL22 of Macrococcus caseolyticus (strain JCSC5402) (Macrococcoides caseolyticum).